A 425-amino-acid chain; its full sequence is MLDLKRIRTDFDTVAAKLKNRGVSEDTLTHLKELDEKRRTLLVQSEELKAGRNIASAAIAQAKRQKEDATQQIADMQKVSADIKTIDNQLVAIDQQVADIITVLPNTPHDSVPVGADEEDNVEIRRWGTPRDFDFEVKAHWDLGEDLDILDWERGAKVTGARFLFYKNLGARLERALYNFMLDEHIKEGYQEIITPYMVNHDSMFGTGQYPKFKEDTFELADTNFVLIPTAEVPLTNYYRGEILDGKELPIYFTAMSPSFRSEAGSAGRDTRGLIRLHQFHKVEMVKFAKPEESYQELEKMTANAENILQKLGLPYRVISLCTGDMGFSAAKTYDLEVWIPAQNTYREISSCSNTEDFQARRAQIRYRDEADGKVKLLHTLNGSGLAVGRTVAAILENYQNEDGSVTIPEVLRPYMGGETVISPK.

230–232 (TAE) serves as a coordination point for L-serine. 261–263 (RSE) provides a ligand contact to ATP. Glu-284 contacts L-serine. 348-351 (EISS) is an ATP binding site. Residue Ser-384 participates in L-serine binding.

This sequence belongs to the class-II aminoacyl-tRNA synthetase family. Type-1 seryl-tRNA synthetase subfamily. Homodimer. The tRNA molecule binds across the dimer.

The protein localises to the cytoplasm. The enzyme catalyses tRNA(Ser) + L-serine + ATP = L-seryl-tRNA(Ser) + AMP + diphosphate + H(+). It catalyses the reaction tRNA(Sec) + L-serine + ATP = L-seryl-tRNA(Sec) + AMP + diphosphate + H(+). The protein operates within aminoacyl-tRNA biosynthesis; selenocysteinyl-tRNA(Sec) biosynthesis; L-seryl-tRNA(Sec) from L-serine and tRNA(Sec): step 1/1. Its function is as follows. Catalyzes the attachment of serine to tRNA(Ser). Is also able to aminoacylate tRNA(Sec) with serine, to form the misacylated tRNA L-seryl-tRNA(Sec), which will be further converted into selenocysteinyl-tRNA(Sec). This Streptococcus pyogenes serotype M3 (strain SSI-1) protein is Serine--tRNA ligase.